The chain runs to 453 residues: Adenylyltransferase and sulfurtransferase MOCS3 (453 aa).

Thr-62 is modified (phosphothreonine). Residues Gly-101, Asp-122, 129 to 133, Lys-146, and 190 to 191 contribute to the ATP site; these read SNFHR and DN. Cys-231 and Cys-234 together coordinate Zn(2+). Cys-248 (glycyl thioester intermediate; for adenylyltransferase activity) is an active-site residue. Zn(2+) is bound by residues Cys-306 and Cys-309. The Rhodanese domain maps to 355–451; sequence QAQPHLLIDV…WTNSVDPSFP (97 aa). Catalysis depends on Cys-410, which acts as the Cysteine persulfide intermediate; for sulfurtransferase activity.

It in the N-terminal section; belongs to the HesA/MoeB/ThiF family. UBA4 subfamily. Requires Zn(2+) as cofactor.

It is found in the cytoplasm. The protein localises to the cytosol. The enzyme catalyses [molybdopterin-synthase sulfur-carrier protein]-C-terminal Gly-Gly + ATP + H(+) = [molybdopterin-synthase sulfur-carrier protein]-C-terminal Gly-Gly-AMP + diphosphate. It catalyses the reaction [molybdopterin-synthase sulfur-carrier protein]-C-terminal Gly-Gly-AMP + S-sulfanyl-L-cysteinyl-[cysteine desulfurase] + AH2 = [molybdopterin-synthase sulfur-carrier protein]-C-terminal-Gly-aminoethanethioate + L-cysteinyl-[cysteine desulfurase] + A + AMP + 2 H(+). The protein operates within tRNA modification; 5-methoxycarbonylmethyl-2-thiouridine-tRNA biosynthesis. Its pathway is cofactor biosynthesis; molybdopterin biosynthesis. In terms of biological role, plays a central role in 2-thiolation of mcm(5)S(2)U at tRNA wobble positions of cytosolic tRNA(Lys), tRNA(Glu) and tRNA(Gln). Also essential during biosynthesis of the molybdenum cofactor. Acts by mediating the C-terminal thiocarboxylation of sulfur carriers URM1 and MOCS2A. Its N-terminus first activates URM1 and MOCS2A as acyl-adenylates (-COAMP), then the persulfide sulfur on the catalytic cysteine is transferred to URM1 and MOCS2A to form thiocarboxylation (-COSH) of their C-terminus. The reaction probably involves hydrogen sulfide that is generated from the persulfide intermediate and that acts as a nucleophile towards URM1 and MOCS2A. Subsequently, a transient disulfide bond is formed. Does not use thiosulfate as sulfur donor; NFS1 probably acting as a sulfur donor for thiocarboxylation reactions. The polypeptide is Adenylyltransferase and sulfurtransferase MOCS3 (Drosophila yakuba (Fruit fly)).